A 540-amino-acid chain; its full sequence is MTLNSLPAWTALQSHFEQIRHARLRDWFAPENDHTPTRAERFTIPGGGIAADFSKNRINDDTLRLLVQLARDAGVEARRDAMFAGEIVNPTEGRAALHTALRATDPQAPFHAQISAERAKMATFARAVRSGTWTGYTGKRIRHVINIGIGGSDLGPKMVVHALHHVATPEITTHFVSNVDGADLARVLEQVDPEETLAIIVSKTFTTLETMTNARSLRDWFVARGCPEDALAKHFVGVSANPAEVVKFGIAADNVFEMWDWVGGRYSLWSAVGLSIMIAIGPEQFDELLAGANDMDRHFREAPLERNLPVLLGLIGIWYRNFFGSQSYLVAPYSEALHYLPSYLQQLEMESNGKSARLDGTFVDYPTSAVTWGEPGTNGQHAFFQMLHQGPTIVPIDFIAVLTPEHPLASHHPKLLANCFAQSEALMLGRTLDEARKVAGPGKEALAPHLTFPGNRPTTTLLVDALTPRTLGALIALYEHKVLVQATVWDINPFDQWGVELGKILGKVVEADLSAESIDPAKHDSSTTALIERARAALKR.

Glutamate 350 functions as the Proton donor in the catalytic mechanism. Residues histidine 381 and lysine 503 contribute to the active site.

The protein belongs to the GPI family.

It is found in the cytoplasm. The catalysed reaction is alpha-D-glucose 6-phosphate = beta-D-fructose 6-phosphate. The protein operates within carbohydrate biosynthesis; gluconeogenesis. It participates in carbohydrate degradation; glycolysis; D-glyceraldehyde 3-phosphate and glycerone phosphate from D-glucose: step 2/4. Catalyzes the reversible isomerization of glucose-6-phosphate to fructose-6-phosphate. This is Glucose-6-phosphate isomerase from Burkholderia lata (strain ATCC 17760 / DSM 23089 / LMG 22485 / NCIMB 9086 / R18194 / 383).